A 380-amino-acid chain; its full sequence is Large ribosomal subunit protein mL38 (380 aa).

A mitochondrion-targeting transit peptide spans 1-26; the sequence is MAAPWWRAALCECRRWRGFSTSAVLG. A coiled-coil region spans residues 99 to 127; it reads RTQQLLERKQAIQELRANVEEERAARLRT.

This sequence belongs to the phosphatidylethanolamine-binding protein family. Mitochondrion-specific ribosomal protein mL38 subfamily. Component of the mitochondrial large ribosomal subunit (mt-LSU). Mature mammalian 55S mitochondrial ribosomes consist of a small (28S) and a large (39S) subunit. The 28S small subunit contains a 12S ribosomal RNA (12S mt-rRNA) and 30 different proteins. The 39S large subunit contains a 16S rRNA (16S mt-rRNA), a copy of mitochondrial valine transfer RNA (mt-tRNA(Val)), which plays an integral structural role, and 52 different proteins. mL38 is located at the central protuberance.

It is found in the mitochondrion. This Homo sapiens (Human) protein is Large ribosomal subunit protein mL38 (MRPL38).